The chain runs to 26 residues: Dermaseptin-B5 (26 aa).

Residue V26 is modified to Valine amide.

Belongs to the frog skin active peptide (FSAP) family. Dermaseptin subfamily. In terms of tissue distribution, expressed by the skin glands.

Its subcellular location is the secreted. Possesses a potent antimicrobial activity against Gram-positive and Gram-negative bacteria. Probably acts by disturbing membrane functions with its amphipathic structure. This Phyllomedusa bicolor (Two-colored leaf frog) protein is Dermaseptin-B5.